A 423-amino-acid chain; its full sequence is Histidine--tRNA ligase (423 aa).

It belongs to the class-II aminoacyl-tRNA synthetase family. As to quaternary structure, homodimer.

It localises to the cytoplasm. It catalyses the reaction tRNA(His) + L-histidine + ATP = L-histidyl-tRNA(His) + AMP + diphosphate + H(+). In Prochlorococcus marinus (strain NATL1A), this protein is Histidine--tRNA ligase.